Consider the following 155-residue polypeptide: Ribosome maturation factor RimP (155 aa).

Belongs to the RimP family.

It is found in the cytoplasm. Its function is as follows. Required for maturation of 30S ribosomal subunits. This chain is Ribosome maturation factor RimP, found in Macrococcus caseolyticus (strain JCSC5402) (Macrococcoides caseolyticum).